A 137-amino-acid polypeptide reads, in one-letter code: uncharacterized protein (137 aa).

Residues Met-1 to Pro-26 form a disordered region.

This is an uncharacterized protein from Homo sapiens (Human).